Reading from the N-terminus, the 77-residue chain is Conotoxin ArMSGL-0143 (77 aa).

Residues M1–Q22 form the signal peptide. The propeptide occupies D23–T44. 3 disulfide bridges follow: C51-C63, C55-C71, and C62-C75. F76 bears the Phenylalanine amide mark.

It belongs to the conotoxin O3 superfamily. As to expression, expressed by the venom duct.

It localises to the secreted. The polypeptide is Conotoxin ArMSGL-0143 (Conus arenatus (Sand-dusted cone)).